The primary structure comprises 281 residues: Phosphatidylglycerol--prolipoprotein diacylglyceryl transferase (281 aa).

7 helical membrane-spanning segments follow: residues 11–31, 57–77, 89–109, 121–141, 194–214, 222–242, and 255–275; these read IIFTIGPVSARWYGFMYVISF, LLYAIFLGSCIGGRIGYIIFY, VFYIWEGGMSFHGGLIGAIIV, ILEISDFITPLIPFGLGAGRI, PTQLYEFFLEGILLFFIIYFF, GSISGLFLIFYGLFRIFIEFF, and IITMGQILSLPMIIAGLIIMY. Position 140 (Arg140) interacts with a 1,2-diacyl-sn-glycero-3-phospho-(1'-sn-glycerol).

The protein belongs to the Lgt family.

It localises to the cell inner membrane. The enzyme catalyses L-cysteinyl-[prolipoprotein] + a 1,2-diacyl-sn-glycero-3-phospho-(1'-sn-glycerol) = an S-1,2-diacyl-sn-glyceryl-L-cysteinyl-[prolipoprotein] + sn-glycerol 1-phosphate + H(+). It participates in protein modification; lipoprotein biosynthesis (diacylglyceryl transfer). In terms of biological role, catalyzes the transfer of the diacylglyceryl group from phosphatidylglycerol to the sulfhydryl group of the N-terminal cysteine of a prolipoprotein, the first step in the formation of mature lipoproteins. This is Phosphatidylglycerol--prolipoprotein diacylglyceryl transferase from Buchnera aphidicola subsp. Acyrthosiphon pisum (strain Tuc7).